A 154-amino-acid polypeptide reads, in one-letter code: Leghemoglobin-2 (154 aa).

The Globin domain maps to 3 to 151 (ALTESQAALV…LAIVIKKEMN (149 aa)). Heme b is bound at residue Ser-46. A Phosphoserine modification is found at Ser-46. His-64 is an O2 binding site. 3 residues coordinate heme b: Lys-67, His-98, and Lys-101. Tyr-139 is subject to Nitrated tyrosine.

This sequence belongs to the plant globin family. In terms of assembly, monomer. Nitrated in effective nodules and particularly in hypoxic conditions; this mechanism may play a protective role in the symbiosis by buffering toxic peroxynitrite NO(2)(-). Nitration level decrease during nodule senescence. In terms of processing, phosphorylation at Ser-46 disrupts the molecular environment of its porphyrin ring oxygen binding pocket, thus leading to a reduced oxygen consumption and to the delivery of oxygen O(2) to symbiosomes. In terms of tissue distribution, root nodules.

Its subcellular location is the cytoplasm. The protein localises to the cytosol. It is found in the nucleus. Leghemoglobin that reversibly binds oxygen O(2) through a pentacoordinated heme iron. In root nodules, facilitates the diffusion of oxygen to the bacteroids while preventing the bacterial nitrogenase from being inactivated by buffering dioxygen, nitric oxide and carbon monoxide, and promoting the formation of reactive oxygen species (ROS, e.g. H(2)O(2)). This role is essential for symbiotic nitrogen fixation (SNF). The protein is Leghemoglobin-2 of Lupinus luteus (European yellow lupine).